The sequence spans 160 residues: MKSLQKGFTLIELMIVVAIIGILAAFAIPAYNDYIARSQAAEGVSLADGLKVRIAENLQDGECKGPDADPQSGVVGNEDIGKYALAKIEGDYDASKTDAGAPNGCKVEITYGQGTAEGKISKLITGKKLVLDQLVNGSFIAGDGTDLADKFMPNAVKAKK.

Residues 1-7 constitute a propeptide, leader sequence; the sequence is MKSLQKG. F8 is subject to N-methylphenylalanine. Residues 8–28 form a helical membrane-spanning segment; that stretch reads FTLIELMIVVAIIGILAAFAI. An intrachain disulfide couples C63 to C105.

It belongs to the N-Me-Phe pilin family. In terms of assembly, the pili are polar flexible filaments of about 5.4 nanometers diameter and 2.5 micrometers average length; they consist of only a single polypeptide chain arranged in a helical configuration of five subunits per turn in the assembled pilus.

The protein resides in the fimbrium. It is found in the membrane. Functionally, major component of the type IV fimbriae that plays an essential role in twitching motility, natural transformation, and protease secretion. The chain is Type IV major fimbrial protein FimA (fimA) from Dichelobacter nodosus (Bacteroides nodosus).